We begin with the raw amino-acid sequence, 451 residues long: Phosphoglucosamine mutase (451 aa).

Ser-103 functions as the Phosphoserine intermediate in the catalytic mechanism. Residues Ser-103, Asp-243, Asp-245, and Asp-247 each coordinate Mg(2+). At Ser-103 the chain carries Phosphoserine.

The protein belongs to the phosphohexose mutase family. The cofactor is Mg(2+). In terms of processing, activated by phosphorylation.

It catalyses the reaction alpha-D-glucosamine 1-phosphate = D-glucosamine 6-phosphate. In terms of biological role, catalyzes the conversion of glucosamine-6-phosphate to glucosamine-1-phosphate. In Lactobacillus johnsonii (strain CNCM I-12250 / La1 / NCC 533), this protein is Phosphoglucosamine mutase.